A 142-amino-acid chain; its full sequence is Regulatory protein RecX (142 aa).

This sequence belongs to the RecX family.

Its subcellular location is the cytoplasm. Its function is as follows. Modulates RecA activity. The chain is Regulatory protein RecX from Thermus thermophilus (strain ATCC BAA-163 / DSM 7039 / HB27).